The sequence spans 400 residues: Mu-type opioid receptor (400 aa).

Residues 1–68 (MDSSAVPANA…CPPTGSPSMI (68 aa)) are Extracellular-facing. N9, N12, N33, N40, and N48 each carry an N-linked (GlcNAc...) asparagine glycan. The chain crosses the membrane as a helical span at residues 69 to 93 (TAITIMALYSIVCVVGLFGNFLVMY). Residues 94–106 (VIVRYTKMKTATN) are Cytoplasmic-facing. A helical membrane pass occupies residues 107–131 (IYIFNLALADALATSTLPFQSVNYL). Residues 132–142 (MGTWPFGTILC) are Extracellular-facing. An intrachain disulfide couples C142 to C219. The helical transmembrane segment at 143-165 (KIVISIDYYNMFTSIFTLCTMSV) threads the bilayer. Topologically, residues 166–185 (DRYIAVCHPVKALDFRTPRN) are cytoplasmic. Phosphotyrosine is present on Y168. The chain crosses the membrane as a helical span at residues 186-207 (AKIVNVCNWIISSAIGLPVMFM). At 208-230 (ATTKYRQGSIDCTLTFSHPTWYW) the chain is on the extracellular side. Residues 231–255 (ENLLKICVFIFAFIMPVLIITVCYG) form a helical membrane-spanning segment. The Cytoplasmic segment spans residues 256–279 (LMILRLKSVRMLSGSKEKDRNLRR). Residues 280 to 306 (ITRMVLVVVAVFIVCWTPIHIYVIIKA) traverse the membrane as a helical segment. Residues 307-314 (LVTIPETT) are Extracellular-facing. The chain crosses the membrane as a helical span at residues 315–338 (FQTVSWHFCIALGYTNSCLNPVLY). Positions 334–338 (NPVLY) match the NPxxY; plays a role in stabilizing the activated conformation of the receptor motif. Over 339–400 (AFLDENFKRC…NLEAETAPLP (62 aa)) the chain is Cytoplasmic. C353 is lipidated: S-palmitoyl cysteine. S365 carries the phosphoserine modification. T372 carries the phosphothreonine modification. Residue S377 is modified to Phosphoserine. The residue at position 396 (T396) is a Phosphothreonine.

This sequence belongs to the G-protein coupled receptor 1 family. Forms homooligomers and heterooligomers with other GPCRs, such as OPRD1, OPRK1, OPRL1, NPFFR2, ADRA2A, SSTR2, CNR1 and CCR5 (probably in dimeric forms). Interacts with heterotrimeric G proteins; interaction with a heterotrimeric complex containing GNAI1, GNB1 and GNG2 stabilizes the active conformation of the receptor and increases its affinity for endomorphin-2, the synthetic opioid peptide DAMGO and for morphinan agonists. Interacts with PPL; the interaction disrupts agonist-mediated G-protein activation. Interacts (via C-terminus) with DNAJB4 (via C-terminus). Interacts with calmodulin; the interaction inhibits the constitutive activity of OPRM1; it abolishes basal and attenuates agonist-stimulated G-protein coupling. Interacts with FLNA, PLD2, RANBP9 and WLS and GPM6A. Interacts with RTP4. Interacts with SYP and GNAS. Interacts with RGS9, RGS17, RGS20, RGS4, PPP1R9B and HINT1. In terms of processing, phosphorylated. Differentially phosphorylated in basal and agonist-induced conditions. Agonist-mediated phosphorylation modulates receptor internalization. Phosphorylated by GRK2 in a agonist-dependent manner. Phosphorylation at Tyr-168 requires receptor activation, is dependent on non-receptor protein tyrosine kinase Src and results in a decrease in agonist efficacy by reducing G-protein coupling efficiency. Phosphorylated on tyrosine residues; the phosphorylation is involved in agonist-induced G-protein-independent receptor down-regulation. Phosphorylation at Ser-377 is involved in G-protein-dependent but not beta-arrestin-dependent activation of the ERK pathway. Ubiquitinated. A basal ubiquitination seems not to be related to degradation. Ubiquitination is increased upon formation of OPRM1:OPRD1 oligomers leading to proteasomal degradation; the ubiquitination is diminished by RTP4.

The protein resides in the cell membrane. Its subcellular location is the cell projection. It is found in the axon. It localises to the perikaryon. The protein localises to the dendrite. The protein resides in the endosome. Its function is as follows. Receptor for endogenous opioids such as beta-endorphin and endomorphin. Receptor for natural and synthetic opioids including morphine, heroin, DAMGO, fentanyl, etorphine, buprenorphin and methadone. Also activated by enkephalin peptides, such as Met-enkephalin or Met-enkephalin-Arg-Phe, with higher affinity for Met-enkephalin-Arg-Phe. Agonist binding to the receptor induces coupling to an inactive GDP-bound heterotrimeric G-protein complex and subsequent exchange of GDP for GTP in the G-protein alpha subunit leading to dissociation of the G-protein complex with the free GTP-bound G-protein alpha and the G-protein beta-gamma dimer activating downstream cellular effectors. The agonist- and cell type-specific activity is predominantly coupled to pertussis toxin-sensitive G(i) and G(o) G alpha proteins, GNAI1, GNAI2, GNAI3 and GNAO1, and to a lesser extent to pertussis toxin-insensitive G alpha proteins GNAZ and GNA15. They mediate an array of downstream cellular responses, including inhibition of adenylate cyclase activity and both N-type and L-type calcium channels, activation of inward rectifying potassium channels, mitogen-activated protein kinase (MAPK), phospholipase C (PLC), phosphoinositide/protein kinase (PKC), phosphoinositide 3-kinase (PI3K) and regulation of NF-kappa-B. Also couples to adenylate cyclase stimulatory G alpha proteins. The selective temporal coupling to G-proteins and subsequent signaling can be regulated by RGSZ proteins, such as RGS9, RGS17 and RGS4. Phosphorylation by members of the GPRK subfamily of Ser/Thr protein kinases and association with beta-arrestins is involved in short-term receptor desensitization. Beta-arrestins associate with the GPRK-phosphorylated receptor and uncouple it from the G-protein thus terminating signal transduction. The phosphorylated receptor is internalized through endocytosis via clathrin-coated pits which involves beta-arrestins. The activation of the ERK pathway occurs either in a G-protein-dependent or a beta-arrestin-dependent manner and is regulated by agonist-specific receptor phosphorylation. Acts as a class A G-protein coupled receptor (GPCR) which dissociates from beta-arrestin at or near the plasma membrane and undergoes rapid recycling. Receptor down-regulation pathways are varying with the agonist and occur dependent or independent of G-protein coupling. Endogenous ligands induce rapid desensitization, endocytosis and recycling. Heterooligomerization with other GPCRs can modulate agonist binding, signaling and trafficking properties. Involved in neurogenesis. The sequence is that of Mu-type opioid receptor (OPRM1) from Saimiri boliviensis boliviensis (Bolivian squirrel monkey).